We begin with the raw amino-acid sequence, 159 residues long: Ribosomal RNA large subunit methyltransferase H (159 aa).

S-adenosyl-L-methionine is bound by residues Leu76, Gly108, and 127–132 (FSPMTF).

The protein belongs to the RNA methyltransferase RlmH family. In terms of assembly, homodimer.

The protein resides in the cytoplasm. It carries out the reaction pseudouridine(1915) in 23S rRNA + S-adenosyl-L-methionine = N(3)-methylpseudouridine(1915) in 23S rRNA + S-adenosyl-L-homocysteine + H(+). Specifically methylates the pseudouridine at position 1915 (m3Psi1915) in 23S rRNA. In Alkaliphilus metalliredigens (strain QYMF), this protein is Ribosomal RNA large subunit methyltransferase H.